Reading from the N-terminus, the 157-residue chain is Serine-protein kinase RsbW (157 aa).

It belongs to the anti-sigma-factor family.

The enzyme catalyses L-seryl-[protein] + ATP = O-phospho-L-seryl-[protein] + ADP + H(+). The catalysed reaction is L-threonyl-[protein] + ATP = O-phospho-L-threonyl-[protein] + ADP + H(+). Its function is as follows. Negative regulator of sigma-B activity. Phosphorylates and inactivates its specific antagonist protein, RsbV. Upon phosphorylation of RsbV, RsbW is released and binds to sigma-B, thereby blocking its ability to form an RNA polymerase holoenzyme (E-sigma-B). This chain is Serine-protein kinase RsbW, found in Listeria innocua serovar 6a (strain ATCC BAA-680 / CLIP 11262).